A 211-amino-acid chain; its full sequence is Uracil phosphoribosyltransferase (211 aa).

Residues Arg78, Arg103, and 130-138 (DPMLATGNS) each bind 5-phospho-alpha-D-ribose 1-diphosphate. Uracil-binding positions include Ile193 and 198-200 (GDA). Position 199 (Asp199) interacts with 5-phospho-alpha-D-ribose 1-diphosphate.

This sequence belongs to the UPRTase family. Mg(2+) serves as cofactor.

It catalyses the reaction UMP + diphosphate = 5-phospho-alpha-D-ribose 1-diphosphate + uracil. It participates in pyrimidine metabolism; UMP biosynthesis via salvage pathway; UMP from uracil: step 1/1. With respect to regulation, allosterically activated by GTP. Functionally, catalyzes the conversion of uracil and 5-phospho-alpha-D-ribose 1-diphosphate (PRPP) to UMP and diphosphate. This is Uracil phosphoribosyltransferase from Acinetobacter baumannii (strain AB307-0294).